The chain runs to 160 residues: UPF0178 protein PSPA7_5991 (160 aa).

The protein belongs to the UPF0178 family.

In Pseudomonas paraeruginosa (strain DSM 24068 / PA7) (Pseudomonas aeruginosa (strain PA7)), this protein is UPF0178 protein PSPA7_5991.